The chain runs to 121 residues: Spindle and kinetochore-associated protein 2 (121 aa).

Ser-101 bears the Phosphoserine mark.

It belongs to the SKA2 family. In terms of assembly, component of the SKA1 complex, composed of SKA1, SKA2 and SKA3. Forms a heterodimer with SKA1; the heterodimer interacting with SKA3. The core SKA1 complex is composed of 2 SKA1-SKA2 heterodimers, each heterodimer interacting with a molecule of the SKA3 homodimer. The core SKA1 complex associates with microtubules and forms oligomeric assemblies. Interacts directly with SKA1. Binds directly to microtubules; but with a much lower affinity than SKA1. May interact with NR3C1; the relevance of such interaction remains unclear in vivo.

Its subcellular location is the cytoplasm. It is found in the cytoskeleton. The protein resides in the spindle. The protein localises to the chromosome. It localises to the centromere. Its subcellular location is the kinetochore. Its function is as follows. Component of the SKA1 complex, a microtubule-binding subcomplex of the outer kinetochore that is essential for proper chromosome segregation. Required for timely anaphase onset during mitosis, when chromosomes undergo bipolar attachment on spindle microtubules leading to silencing of the spindle checkpoint. The SKA1 complex is a direct component of the kinetochore-microtubule interface and directly associates with microtubules as oligomeric assemblies. The complex facilitates the processive movement of microspheres along a microtubule in a depolymerization-coupled manner. In the complex, it is required for SKA1 localization. Affinity for microtubules is synergistically enhanced in the presence of the ndc-80 complex and may allow the ndc-80 complex to track depolymerizing microtubules. In Homo sapiens (Human), this protein is Spindle and kinetochore-associated protein 2 (SKA2).